A 529-amino-acid polypeptide reads, in one-letter code: MYLFMVVILFYTLVIFYVAGVNGFHIFLQMSVWRPSEATVYLPPVPVSKVVSTDEYVSRTSIYYYAGSSRLLAVGHPYFSIPNPSNTKKVLVPKVSGLQYRVFRVRLPDPNKFGFPDTSFYNPDTQRLVWACVGIEIGRGQPLGVGISGHPLLNKFDDTETNNKYPSQPGTDNRECLSMDAKQTQLCIIGCKPPTGEHWGKGTPCSGNSNGPGACPPLELMNTVIEDGDMIDTGFGCMDFKSLQANKSDVPLDICTSICKYPDYLGMASEAYGDSLFFFLRREQMFVRHLFNRAGKLGEDVPTDLYFKGSANTSALQTSAFFPTPSGSMVSSESQLFNKPYWLQRAQGHNNGICWGNQIFVTVVDTTRSTNMTLCSEEKSEATYKNENFKEYLRHVEEYDLQFIFQLCKISLTANVMQYIHTMNPDILEDWQFGLTPPPSGNLQDTYRFVTSQAITCQKTSPPTAKEDPLKKYSFWEINLKEKFSADLDQFPLGRKFLLQAGFTAKPKLKRSSPSSSSSSSAKRKKVKR.

A disordered region spans residues 506-529; the sequence is KPKLKRSSPSSSSSSSAKRKKVKR. Residues 512 to 521 are compositionally biased toward low complexity; the sequence is SSPSSSSSSS.

Belongs to the papillomaviridae L1 protein family. Self-assembles into homopentamers. The capsid has an icosahedral symmetry and consists of 72 capsomers, with each capsomer being a pentamer of L1. Interacts with the minor capsid protein L2; this interaction is necessary for viral genome encapsidation. Interacts with protein E2; this interaction enhances E2-dependent replication and transcription activation.

The protein resides in the virion. The protein localises to the host nucleus. In terms of biological role, forms an icosahedral capsid with a T=7 symmetry and a 50 nm diameter. The capsid is composed of 72 pentamers linked to each other by disulfide bonds and associated with L2 proteins. Binds to heparan sulfate proteoglycans on cell surface of basal layer keratinocytes to provide initial virion attachment. This binding mediates a conformational change in the virus capsid that facilitates efficient infection. The virion enters the host cell via endocytosis. During virus trafficking, L1 protein dissociates from the viral DNA and the genomic DNA is released to the host nucleus. The virion assembly takes place within the cell nucleus. Encapsulates the genomic DNA together with protein L2. The polypeptide is Major capsid protein L1 (Homo sapiens (Human)).